We begin with the raw amino-acid sequence, 265 residues long: Energy-coupling factor transporter transmembrane protein EcfT (265 aa).

5 helical membrane passes run I29–I49, V73–V93, A110–T130, L143–I163, and F242–W262.

This sequence belongs to the energy-coupling factor EcfT family. Forms a stable energy-coupling factor (ECF) transporter complex composed of 2 membrane-embedded substrate-binding proteins (S component), 2 ATP-binding proteins (A component) and 2 transmembrane proteins (T component). May be able to interact with more than 1 S component at a time.

The protein localises to the cell membrane. Functionally, transmembrane (T) component of an energy-coupling factor (ECF) ABC-transporter complex. Unlike classic ABC transporters this ECF transporter provides the energy necessary to transport a number of different substrates. This chain is Energy-coupling factor transporter transmembrane protein EcfT, found in Brevibacillus brevis (strain 47 / JCM 6285 / NBRC 100599).